Reading from the N-terminus, the 138-residue chain is ATP synthase epsilon chain (138 aa).

This sequence belongs to the ATPase epsilon chain family. F-type ATPases have 2 components, CF(1) - the catalytic core - and CF(0) - the membrane proton channel. CF(1) has five subunits: alpha(3), beta(3), gamma(1), delta(1), epsilon(1). CF(0) has three main subunits: a, b and c.

It is found in the cell inner membrane. In terms of biological role, produces ATP from ADP in the presence of a proton gradient across the membrane. The polypeptide is ATP synthase epsilon chain (Trichlorobacter lovleyi (strain ATCC BAA-1151 / DSM 17278 / SZ) (Geobacter lovleyi)).